Consider the following 465-residue polypeptide: UDP-N-acetylmuramoylalanine--D-glutamate ligase (465 aa).

127-133 provides a ligand contact to ATP; the sequence is GSNGKST.

The protein belongs to the MurCDEF family.

It localises to the cytoplasm. The catalysed reaction is UDP-N-acetyl-alpha-D-muramoyl-L-alanine + D-glutamate + ATP = UDP-N-acetyl-alpha-D-muramoyl-L-alanyl-D-glutamate + ADP + phosphate + H(+). The protein operates within cell wall biogenesis; peptidoglycan biosynthesis. In terms of biological role, cell wall formation. Catalyzes the addition of glutamate to the nucleotide precursor UDP-N-acetylmuramoyl-L-alanine (UMA). This is UDP-N-acetylmuramoylalanine--D-glutamate ligase from Cereibacter sphaeroides (strain KD131 / KCTC 12085) (Rhodobacter sphaeroides).